We begin with the raw amino-acid sequence, 265 residues long: Urease accessory protein UreH (265 aa).

Belongs to the UreD family. As to quaternary structure, ureH, UreF and UreG form a complex that acts as a GTP-hydrolysis-dependent molecular chaperone, activating the urease apoprotein by helping to assemble the nickel containing metallocenter of UreC. The UreE protein probably delivers the nickel.

It localises to the cytoplasm. Its function is as follows. Required for maturation of urease via the functional incorporation of the urease nickel metallocenter. This Helicobacter pylori (strain HPAG1) protein is Urease accessory protein UreH.